A 642-amino-acid polypeptide reads, in one-letter code: Polyglycine hydrolase (642 aa).

Residues 1 to 23 (MYTSRLLLSNLASCLSLATLVAS) form the signal peptide. N-linked (GlcNAc...) asparagine glycosylation is found at N37, N100, N159, and N341. The cysteines at positions 149 and 183 are disulfide-linked. The active site involves S370. Residues N390, N407, N444, N487, and N494 are each glycosylated (N-linked (GlcNAc...) asparagine).

The protein belongs to the peptidase S12 family.

Its subcellular location is the secreted. It carries out the reaction a glycyl-glycyl-[protein] + H2O = N-terminal glycyl-[protein] + [protein]-C-terminal glycine. With respect to regulation, not inhibited by phenylmethylsulfonyl fluoride (PMSF; serine peptidase class S1 inhibitor), clavulanic acid (beta-lactamase inhibitor) or ampicillin (penicillin-binding protein (PBP) inhibitor). Functionally, serine-type endopeptidase that cleaves Gly-Gly bonds in the polyglycine linker of host plant class IV chitinases to disrupt their chitin-binding, and thereby plays a role in lowering the defense responses of the host to the fungus. Degrades Z.mays Endochitinase A (CHIA). Degrades Z.mays Endochitinase B (CHIB). Has no activity on Z.mays CHIA following CHIA cleavage by fungalysin. The chain is Polyglycine hydrolase from Epicoccum sorghinum (Endophyte fungus).